Here is a 395-residue protein sequence, read N- to C-terminus: Probable protein arginine N-methyltransferase 6.2 (395 aa).

A compositionally biased stretch (gly residues) spans 1–11; sequence MFAGGADGGNG. A disordered region spans residues 1–37; the sequence is MFAGGADGGNGHLPRPRRARRGGGGGGGMGSPPLGPP. The SAM-dependent MTase PRMT-type domain maps to 45–390; the sequence is DMAYFKAYSH…YFTRDQWYVK (346 aa). Positions 58, 67, 91, 113, and 142 each coordinate S-adenosyl-L-methionine. Active-site residues include Glu156 and Glu165. The disordered stretch occupies residues 300 to 324; the sequence is KKQANQCLDGNTQDASPSNKKKKAD. Residues 302–317 are compositionally biased toward polar residues; sequence QANQCLDGNTQDASPS.

The protein belongs to the class I-like SAM-binding methyltransferase superfamily. Protein arginine N-methyltransferase family. PRMT6 subfamily.

Functionally, arginine methyltransferase that can both catalyze the formation of omega-N monomethylarginine (MMA) and asymmetrical dimethylarginine (aDMA). In Oryza sativa subsp. indica (Rice), this protein is Probable protein arginine N-methyltransferase 6.2 (PRMT6.2).